The following is a 490-amino-acid chain: Nicotinate phosphoribosyltransferase (490 aa).

His206 bears the Phosphohistidine mark.

This sequence belongs to the NAPRTase family. In terms of processing, transiently phosphorylated on a His residue during the reaction cycle. Phosphorylation strongly increases the affinity for substrates and increases the rate of nicotinate D-ribonucleotide production. Dephosphorylation regenerates the low-affinity form of the enzyme, leading to product release.

It catalyses the reaction nicotinate + 5-phospho-alpha-D-ribose 1-diphosphate + ATP + H2O = nicotinate beta-D-ribonucleotide + ADP + phosphate + diphosphate. The protein operates within cofactor biosynthesis; NAD(+) biosynthesis; nicotinate D-ribonucleotide from nicotinate: step 1/1. In terms of biological role, catalyzes the synthesis of beta-nicotinate D-ribonucleotide from nicotinate and 5-phospho-D-ribose 1-phosphate at the expense of ATP. The protein is Nicotinate phosphoribosyltransferase (pncB) of Bacillus subtilis (strain 168).